The following is a 142-amino-acid chain: Movement protein (142 aa).

Residues 1 to 142 (MDLPEDQARF…LDRSESLSRY (142 aa)) form a disordered region. Composition is skewed to polar residues over residues 9–22 (RFTNSYSLRTTSME) and 33–43 (LYQSASRSQMA). Over residues 50-62 (SIISRTSSWRTSP) the composition is skewed to low complexity. Polar residues-rich tracts occupy residues 74-95 (MNSILTSRTQQSSPKLTNSASP) and 113-124 (TTLQRTNSGFST). Residues 125–142 (KETEMPRLLDRSESLSRY) show a composition bias toward basic and acidic residues.

It belongs to the luteoviruses movement protein family.

Its function is as follows. Transports viral genome to neighboring plant cells directly through plasmosdesmata, without any budding. The movement protein allows efficient cell to cell propagation, by bypassing the host cell wall barrier. The protein is Movement protein of Cicer arietinum (Chickpea).